The primary structure comprises 385 residues: Calcium/calmodulin-dependent protein kinase type 1D (385 aa).

Residues 23-279 (FEFKETLGTG…CEQAARHPWI (257 aa)) form the Protein kinase domain. ATP is bound by residues 29-37 (LGTGAFSEV) and K52. Residue K113 forms a Glycyl lysine isopeptide (Lys-Gly) (interchain with G-Cter in SUMO2) linkage. The residue at position 122 (S122) is a Phosphoserine. D144 acts as the Proton acceptor in catalysis. Residue T180 is modified to Phosphothreonine; by CaMKK1 and CaMKK2. The tract at residues 279-319 (IAGDTALNKNIHESVSAQIRKNFAKSKWRQAFNATAVVRHM) is autoinhibitory domain. Positions 299-320 (KNFAKSKWRQAFNATAVVRHMR) are calmodulin-binding. Positions 318–324 (HMRKLHL) match the Nuclear export signal motif. A disordered region spans residues 360–385 (SSGVSGVGAERRPRPTTVTAVHSGSK). Polar residues predominate over residues 375 to 385 (TTVTAVHSGSK).

The protein belongs to the protein kinase superfamily. CAMK Ser/Thr protein kinase family. CaMK subfamily. Widely expressed. Highly and mostly expressed in polymorphonuclear leukocytes (neutrophilic and eosinophilic granulocytes) while little or no expression is observed in monocytes and lymphocytes.

Its subcellular location is the cytoplasm. It is found in the nucleus. The enzyme catalyses L-seryl-[protein] + ATP = O-phospho-L-seryl-[protein] + ADP + H(+). It catalyses the reaction L-threonyl-[protein] + ATP = O-phospho-L-threonyl-[protein] + ADP + H(+). Its activity is regulated as follows. Activated by Ca(2+)/calmodulin. Binding of calmodulin results in conformational change that relieves intrasteric autoinhibition and allows phosphorylation of Thr-180 within the activation loop by CaMKK1 or CaMKK2. Phosphorylation of Thr-180 results in several fold increase in total activity. Unlike CaMK4, may be unable to exhibit autonomous activity after Ca(2+)/calmodulin activation. In terms of biological role, calcium/calmodulin-dependent protein kinase that operates in the calcium-triggered CaMKK-CaMK1 signaling cascade and, upon calcium influx, activates CREB-dependent gene transcription, regulates calcium-mediated granulocyte function and respiratory burst and promotes basal dendritic growth of hippocampal neurons. In neutrophil cells, required for cytokine-induced proliferative responses and activation of the respiratory burst. Activates the transcription factor CREB1 in hippocampal neuron nuclei. May play a role in apoptosis of erythroleukemia cells. In vitro, phosphorylates transcription factor CREM isoform Beta. The polypeptide is Calcium/calmodulin-dependent protein kinase type 1D (CAMK1D) (Homo sapiens (Human)).